We begin with the raw amino-acid sequence, 346 residues long: tRNA-specific 2-thiouridylase MnmA (346 aa).

ATP is bound at residue 6 to 13 (AMSGGTDS). Residue Cys-90 is the Nucleophile of the active site. A disulfide bridge connects residues Cys-90 and Cys-187. Gly-114 serves as a coordination point for ATP. Residues 137-139 (KDQ) are interaction with tRNA. Cys-187 functions as the Cysteine persulfide intermediate in the catalytic mechanism. Residues 292–293 (RY) form an interaction with tRNA region.

The protein belongs to the MnmA/TRMU family.

It is found in the cytoplasm. The enzyme catalyses S-sulfanyl-L-cysteinyl-[protein] + uridine(34) in tRNA + AH2 + ATP = 2-thiouridine(34) in tRNA + L-cysteinyl-[protein] + A + AMP + diphosphate + H(+). Functionally, catalyzes the 2-thiolation of uridine at the wobble position (U34) of tRNA, leading to the formation of s(2)U34. This is tRNA-specific 2-thiouridylase MnmA from Nitratidesulfovibrio vulgaris (strain DP4) (Desulfovibrio vulgaris).